The chain runs to 803 residues: Phenylalanine--tRNA ligase beta subunit (803 aa).

The tRNA-binding domain maps to Ser-40–Tyr-150. The B5 domain maps to Pro-405–Lys-480. Asp-458 and Glu-468 together coordinate Mg(2+). The FDX-ACB domain maps to Ser-710 to Arg-803.

The protein belongs to the phenylalanyl-tRNA synthetase beta subunit family. Type 1 subfamily. Tetramer of two alpha and two beta subunits. It depends on Mg(2+) as a cofactor.

It localises to the cytoplasm. The enzyme catalyses tRNA(Phe) + L-phenylalanine + ATP = L-phenylalanyl-tRNA(Phe) + AMP + diphosphate + H(+). The chain is Phenylalanine--tRNA ligase beta subunit from Blochmanniella floridana.